A 128-amino-acid chain; its full sequence is Histone H2A (128 aa).

Residues 1 to 22 (MSGRGKTGGKARAKAKTRSSRA) form a disordered region. Ser2 is subject to N-acetylserine. The residue at position 2 (Ser2) is a Phosphoserine. Lys6 carries the N6-(2-hydroxyisobutyryl)lysine modification. Position 6 is an N6-acetyllysine (Lys6). Positions 7-19 (TGGKARAKAKTRS) are enriched in basic residues. Lys10 carries the post-translational modification N6-(2-hydroxyisobutyryl)lysine; alternate. Lys10 carries the post-translational modification N6-lactoyllysine; alternate. Position 10 is an N6-succinyllysine (Lys10). Residues Lys14 and Lys16 each participate in a glycyl lysine isopeptide (Lys-Gly) (interchain with G-Cter in ubiquitin) cross-link. At Lys37 the chain carries N6-(2-hydroxyisobutyryl)lysine; alternate. Lys75 and Lys76 each carry N6-(2-hydroxyisobutyryl)lysine. Lys96 carries the post-translational modification N6-(2-hydroxyisobutyryl)lysine; alternate. Residue Lys96 is modified to N6-succinyllysine. Position 96 is an N6-glutaryllysine; alternate (Lys96). Residue Gln105 is modified to N5-methylglutamine. Lys119 carries the N6-(2-hydroxyisobutyryl)lysine; alternate modification. An N6-glutaryllysine; alternate mark is found at Lys119, Lys120, and Lys126. Lys120 participates in a covalent cross-link: Glycyl lysine isopeptide (Lys-Gly) (interchain with G-Cter in ubiquitin).

In terms of assembly, the nucleosome is a histone octamer containing two molecules each of H2A, H2B, H3 and H4 assembled in one H3-H4 heterotetramer and two H2A-H2B heterodimers. The octamer wraps approximately 147 bp of DNA. Monoubiquitination of Lys-120 (H2AK119Ub) gives a specific tag for epigenetic transcriptional repression. Following DNA double-strand breaks (DSBs), it is ubiquitinated through 'Lys-63' linkage of ubiquitin moieties, leading to the recruitment of repair proteins to sites of DNA damage. H2AK119Ub and ionizing radiation-induced 'Lys-63'-linked ubiquitination are distinct events. Post-translationally, phosphorylation on Ser-2 is enhanced during mitosis. Phosphorylation on Ser-2 directly represses transcription. In terms of processing, glutamine methylation at Gln-105 (H2AQ104me) by FBL is specifically dedicated to polymerase I. It is present at 35S ribosomal DNA locus and impairs binding of the FACT complex. Expressed and secreted by skin epithelium.

The protein resides in the nucleus. It is found in the chromosome. Functionally, core component of nucleosome. Nucleosomes wrap and compact DNA into chromatin, limiting DNA accessibility to the cellular machineries which require DNA as a template. Histones thereby play a central role in transcription regulation, DNA repair, DNA replication and chromosomal stability. DNA accessibility is regulated via a complex set of post-translational modifications of histones, also called histone code, and nucleosome remodeling. In terms of biological role, the secreted form has antibacterial activity against Gram-positive bacteria and antifungal activity against S.cerevisiae. The sequence is that of Histone H2A from Oncorhynchus mykiss (Rainbow trout).